A 503-amino-acid chain; its full sequence is Glutamate--tRNA ligase (503 aa).

Positions 12–22 (PSPTGYLHVGG) match the 'HIGH' region motif. Positions 259–263 (KLSKR) match the 'KMSKS' region motif. K262 contacts ATP.

The protein belongs to the class-I aminoacyl-tRNA synthetase family. Glutamate--tRNA ligase type 1 subfamily. Monomer.

The protein localises to the cytoplasm. The catalysed reaction is tRNA(Glu) + L-glutamate + ATP = L-glutamyl-tRNA(Glu) + AMP + diphosphate. Catalyzes the attachment of glutamate to tRNA(Glu) in a two-step reaction: glutamate is first activated by ATP to form Glu-AMP and then transferred to the acceptor end of tRNA(Glu). The sequence is that of Glutamate--tRNA ligase from Chloroherpeton thalassium (strain ATCC 35110 / GB-78).